The primary structure comprises 396 residues: L-lactate dehydrogenase (396 aa).

Residues 1-380 form the FMN hydroxy acid dehydrogenase domain; the sequence is MIISAASDYR…SGDSLVQELG (380 aa). Residue Y24 coordinates substrate. FMN is bound by residues S106 and Q127. A substrate-binding site is contributed by Y129. T155 contributes to the FMN binding site. Residue R164 participates in substrate binding. K251 serves as a coordination point for FMN. H275 serves as the catalytic Proton acceptor. A substrate-binding site is contributed by R278. 306–330 serves as a coordination point for FMN; the sequence is DSGIRNGLDVVRMIALGADTVLLGR.

It belongs to the FMN-dependent alpha-hydroxy acid dehydrogenase family. FMN serves as cofactor.

Its subcellular location is the cell inner membrane. The catalysed reaction is (S)-lactate + A = pyruvate + AH2. Catalyzes the conversion of L-lactate to pyruvate. Is coupled to the respiratory chain. This is L-lactate dehydrogenase from Salmonella arizonae (strain ATCC BAA-731 / CDC346-86 / RSK2980).